A 611-amino-acid chain; its full sequence is Brain-enriched guanylate kinase-associated protein (611 aa).

Phosphotyrosine is present on tyrosine 156. Phosphoserine occurs at positions 219, 248, and 265. A Phosphothreonine modification is found at threonine 268. Serine 284, serine 364, and serine 391 each carry phosphoserine. Arginine 399 bears the Asymmetric dimethylarginine mark. 7 positions are modified to phosphoserine: serine 474, serine 484, serine 494, serine 496, serine 519, serine 521, and serine 525. The interval leucine 520 to asparagine 611 is disordered. Over residues glutamate 554–leucine 563 the composition is skewed to basic and acidic residues. 2 positions are modified to phosphoserine: serine 571 and serine 581.

In terms of assembly, interacts with DLG4 and DLGAP1 and forms a ternary complex. Brain-specific. Expressed in neurons and rather enriched at synaptic junctions.

The protein resides in the cytoplasm. Its subcellular location is the membrane. May sustain the structure of the postsynaptic density (PSD). This Rattus norvegicus (Rat) protein is Brain-enriched guanylate kinase-associated protein (Begain).